The following is a 129-amino-acid chain: MARKTNTRKKRVKKNIEAGIAHIRSTFNNTIVTLTDTHGNALSWSSAGALGFRGSRKSTPFAAQMAAEAASKVAMEHGLKTLEVTVKGPGAGREAAIRALQAAGLEVTAIRDVTPVPHNGCRPPKRRRV.

This sequence belongs to the universal ribosomal protein uS11 family. As to quaternary structure, part of the 30S ribosomal subunit. Interacts with proteins S7 and S18. Binds to IF-3.

Located on the platform of the 30S subunit, it bridges several disparate RNA helices of the 16S rRNA. Forms part of the Shine-Dalgarno cleft in the 70S ribosome. This chain is Small ribosomal subunit protein uS11, found in Bacillus mycoides (strain KBAB4) (Bacillus weihenstephanensis).